Reading from the N-terminus, the 174-residue chain is Crossover junction endodeoxyribonuclease RuvC (174 aa).

Catalysis depends on residues Asp8, Glu67, and Asp139. Residues Asp8, Glu67, and Asp139 each contribute to the Mg(2+) site.

The protein belongs to the RuvC family. In terms of assembly, homodimer which binds Holliday junction (HJ) DNA. The HJ becomes 2-fold symmetrical on binding to RuvC with unstacked arms; it has a different conformation from HJ DNA in complex with RuvA. In the full resolvosome a probable DNA-RuvA(4)-RuvB(12)-RuvC(2) complex forms which resolves the HJ. The cofactor is Mg(2+).

It localises to the cytoplasm. It carries out the reaction Endonucleolytic cleavage at a junction such as a reciprocal single-stranded crossover between two homologous DNA duplexes (Holliday junction).. Its function is as follows. The RuvA-RuvB-RuvC complex processes Holliday junction (HJ) DNA during genetic recombination and DNA repair. Endonuclease that resolves HJ intermediates. Cleaves cruciform DNA by making single-stranded nicks across the HJ at symmetrical positions within the homologous arms, yielding a 5'-phosphate and a 3'-hydroxyl group; requires a central core of homology in the junction. The consensus cleavage sequence is 5'-(A/T)TT(C/G)-3'. Cleavage occurs on the 3'-side of the TT dinucleotide at the point of strand exchange. HJ branch migration catalyzed by RuvA-RuvB allows RuvC to scan DNA until it finds its consensus sequence, where it cleaves and resolves the cruciform DNA. The sequence is that of Crossover junction endodeoxyribonuclease RuvC from Pseudomonas savastanoi pv. phaseolicola (strain 1448A / Race 6) (Pseudomonas syringae pv. phaseolicola (strain 1448A / Race 6)).